We begin with the raw amino-acid sequence, 146 residues long: Prefoldin subunit alpha 1 (146 aa).

This sequence belongs to the prefoldin subunit alpha family. As to quaternary structure, heterohexamer of two alpha and four beta subunits.

Its subcellular location is the cytoplasm. Functionally, molecular chaperone capable of stabilizing a range of proteins. Seems to fulfill an ATP-independent, HSP70-like function in archaeal de novo protein folding. In Thermococcus kodakarensis (strain ATCC BAA-918 / JCM 12380 / KOD1) (Pyrococcus kodakaraensis (strain KOD1)), this protein is Prefoldin subunit alpha 1.